The chain runs to 465 residues: Adenosylhomocysteinase (465 aa).

The substrate site is built by T56, D131, and E191. Residue 192–194 (TTT) coordinates NAD(+). 2 residues coordinate substrate: K221 and D225. Residues N226, 255–260 (GYGDVG), E278, N313, 334–336 (IGH), and N379 each bind NAD(+).

The protein belongs to the adenosylhomocysteinase family. The cofactor is NAD(+).

It is found in the cytoplasm. The catalysed reaction is S-adenosyl-L-homocysteine + H2O = L-homocysteine + adenosine. It participates in amino-acid biosynthesis; L-homocysteine biosynthesis; L-homocysteine from S-adenosyl-L-homocysteine: step 1/1. Functionally, may play a key role in the regulation of the intracellular concentration of adenosylhomocysteine. The polypeptide is Adenosylhomocysteinase (Chelativorans sp. (strain BNC1)).